We begin with the raw amino-acid sequence, 220 residues long: N-(5'-phosphoribosyl)anthranilate isomerase (220 aa).

The protein belongs to the TrpF family.

The catalysed reaction is N-(5-phospho-beta-D-ribosyl)anthranilate = 1-(2-carboxyphenylamino)-1-deoxy-D-ribulose 5-phosphate. Its pathway is amino-acid biosynthesis; L-tryptophan biosynthesis; L-tryptophan from chorismate: step 3/5. The polypeptide is N-(5'-phosphoribosyl)anthranilate isomerase (Xylella fastidiosa (strain 9a5c)).